We begin with the raw amino-acid sequence, 406 residues long: 4-hydroxy-3-methylbut-2-en-1-yl diphosphate synthase (ferredoxin) (406 aa).

Positions 313, 316, 347, and 354 each coordinate [4Fe-4S] cluster.

This sequence belongs to the IspG family. [4Fe-4S] cluster is required as a cofactor.

The enzyme catalyses (2E)-4-hydroxy-3-methylbut-2-enyl diphosphate + 2 oxidized [2Fe-2S]-[ferredoxin] + H2O = 2-C-methyl-D-erythritol 2,4-cyclic diphosphate + 2 reduced [2Fe-2S]-[ferredoxin] + H(+). It participates in isoprenoid biosynthesis; isopentenyl diphosphate biosynthesis via DXP pathway; isopentenyl diphosphate from 1-deoxy-D-xylulose 5-phosphate: step 5/6. Functionally, converts 2C-methyl-D-erythritol 2,4-cyclodiphosphate (ME-2,4cPP) into 1-hydroxy-2-methyl-2-(E)-butenyl 4-diphosphate. This is 4-hydroxy-3-methylbut-2-en-1-yl diphosphate synthase (ferredoxin) from Picosynechococcus sp. (strain ATCC 27264 / PCC 7002 / PR-6) (Agmenellum quadruplicatum).